The sequence spans 236 residues: Leucyl/phenylalanyl-tRNA--protein transferase (236 aa).

Belongs to the L/F-transferase family.

The protein resides in the cytoplasm. It carries out the reaction N-terminal L-lysyl-[protein] + L-leucyl-tRNA(Leu) = N-terminal L-leucyl-L-lysyl-[protein] + tRNA(Leu) + H(+). The catalysed reaction is N-terminal L-arginyl-[protein] + L-leucyl-tRNA(Leu) = N-terminal L-leucyl-L-arginyl-[protein] + tRNA(Leu) + H(+). The enzyme catalyses L-phenylalanyl-tRNA(Phe) + an N-terminal L-alpha-aminoacyl-[protein] = an N-terminal L-phenylalanyl-L-alpha-aminoacyl-[protein] + tRNA(Phe). In terms of biological role, functions in the N-end rule pathway of protein degradation where it conjugates Leu, Phe and, less efficiently, Met from aminoacyl-tRNAs to the N-termini of proteins containing an N-terminal arginine or lysine. The polypeptide is Leucyl/phenylalanyl-tRNA--protein transferase (Shewanella pealeana (strain ATCC 700345 / ANG-SQ1)).